The primary structure comprises 224 residues: 2,5-diamino-6-ribosylamino-4(3H)-pyrimidinone 5'-phosphate reductase (224 aa).

NADP(+)-binding positions include glycine 16, threonine 57, aspartate 61, 83-86, valine 134, and 156-159; these read SKLR and GGTL.

This sequence belongs to the HTP reductase family. Homodimer.

It carries out the reaction 2,5-diamino-6-(1-D-ribitylamino)pyrimidin-4(3H)-one 5'-phosphate + NADP(+) = 2,5-diamino-6-(1-D-ribosylamino)pyrimidin-4(3H)-one 5'-phosphate + NADPH + H(+). The enzyme catalyses 2,5-diamino-6-(1-D-ribitylamino)pyrimidin-4(3H)-one 5'-phosphate + NAD(+) = 2,5-diamino-6-(1-D-ribosylamino)pyrimidin-4(3H)-one 5'-phosphate + NADH + H(+). It participates in cofactor biosynthesis; riboflavin biosynthesis. Catalyzes an early step in riboflavin biosynthesis, the NAD(P)H-dependent reduction of the ribose side chain of 2,5-diamino-6-ribosylamino-4(3H)-pyrimidinone 5'-phosphate, yielding 2,5-diamino-6-ribitylamino-4(3H)-pyrimidinone 5'-phosphate. The beta anomer is the authentic substrate, and the alpha anomer can serve as substrate subsequent to spontaneous anomerization. NADPH and NADH function equally well as the reductants. Does not catalyze the reduction of 5-amino-6-(5-phospho-D-ribosylamino)uracil to 5-amino-6-(5-phospho-D-ribitylamino)uracil. The polypeptide is 2,5-diamino-6-ribosylamino-4(3H)-pyrimidinone 5'-phosphate reductase (arfC) (Methanocaldococcus jannaschii (strain ATCC 43067 / DSM 2661 / JAL-1 / JCM 10045 / NBRC 100440) (Methanococcus jannaschii)).